Consider the following 441-residue polypeptide: GTPase Der (441 aa).

2 consecutive EngA-type G domains span residues P4–S169 and P178–S353. Residues G10–S17, D57–I61, N120–D123, G184–S191, D231–L235, and N296–D299 each bind GTP. The KH-like domain maps to M354 to K438.

It belongs to the TRAFAC class TrmE-Era-EngA-EngB-Septin-like GTPase superfamily. EngA (Der) GTPase family. In terms of assembly, associates with the 50S ribosomal subunit.

In terms of biological role, GTPase that plays an essential role in the late steps of ribosome biogenesis. The protein is GTPase Der of Agathobacter rectalis (strain ATCC 33656 / DSM 3377 / JCM 17463 / KCTC 5835 / VPI 0990) (Eubacterium rectale).